The sequence spans 336 residues: Glyceraldehyde-3-phosphate dehydrogenase (336 aa).

NAD(+)-binding positions include 12–13 (RI), aspartate 34, arginine 78, and serine 120. D-glyceraldehyde 3-phosphate is bound by residues 151 to 153 (SCT) and threonine 182. Cysteine 152 acts as the Nucleophile in catalysis. Asparagine 183 provides a ligand contact to NAD(+). D-glyceraldehyde 3-phosphate is bound by residues 211 to 212 (NG) and arginine 234. Asparagine 316 provides a ligand contact to NAD(+).

This sequence belongs to the glyceraldehyde-3-phosphate dehydrogenase family. In terms of assembly, homotetramer.

The protein localises to the cytoplasm. It catalyses the reaction D-glyceraldehyde 3-phosphate + phosphate + NAD(+) = (2R)-3-phospho-glyceroyl phosphate + NADH + H(+). It functions in the pathway carbohydrate degradation; glycolysis; pyruvate from D-glyceraldehyde 3-phosphate: step 1/5. In terms of biological role, catalyzes the oxidative phosphorylation of glyceraldehyde 3-phosphate (G3P) to 1,3-bisphosphoglycerate (BPG) using the cofactor NAD. The first reaction step involves the formation of a hemiacetal intermediate between G3P and a cysteine residue, and this hemiacetal intermediate is then oxidized to a thioester, with concomitant reduction of NAD to NADH. The reduced NADH is then exchanged with the second NAD, and the thioester is attacked by a nucleophilic inorganic phosphate to produce BPG. The sequence is that of Glyceraldehyde-3-phosphate dehydrogenase (gap) from Heyndrickxia coagulans (Weizmannia coagulans).